The primary structure comprises 317 residues: Aspartate carbamoyltransferase catalytic subunit (317 aa).

Carbamoyl phosphate-binding residues include Arg66 and Thr67. Residue Lys94 coordinates L-aspartate. Arg116, His144, and Gln147 together coordinate carbamoyl phosphate. L-aspartate contacts are provided by Arg177 and Arg231. Positions 272 and 273 each coordinate carbamoyl phosphate.

It belongs to the aspartate/ornithine carbamoyltransferase superfamily. ATCase family. As to quaternary structure, heterododecamer (2C3:3R2) of six catalytic PyrB chains organized as two trimers (C3), and six regulatory PyrI chains organized as three dimers (R2).

The catalysed reaction is carbamoyl phosphate + L-aspartate = N-carbamoyl-L-aspartate + phosphate + H(+). The protein operates within pyrimidine metabolism; UMP biosynthesis via de novo pathway; (S)-dihydroorotate from bicarbonate: step 2/3. Functionally, catalyzes the condensation of carbamoyl phosphate and aspartate to form carbamoyl aspartate and inorganic phosphate, the committed step in the de novo pyrimidine nucleotide biosynthesis pathway. This is Aspartate carbamoyltransferase catalytic subunit from Rhodopseudomonas palustris (strain HaA2).